Consider the following 648-residue polypeptide: Replication restart protein PriA (648 aa).

The Helicase ATP-binding domain occupies 131–297 (TILNESNKPT…KTHKYQLVTL (167 aa)). Residue 144 to 151 (GVTGSGKT) participates in ATP binding. The short motif at 240–243 (DEEH) is the DEAH box element. The Zn(2+) site is built by Cys-358, Cys-361, Cys-367, Cys-370, Cys-385, Cys-388, Cys-398, and Cys-401. The Helicase C-terminal domain occupies 375–548 (VLHKATKKLE…RFFTNELEIR (174 aa)).

Belongs to the helicase family. PriA subfamily. Component of the replication restart primosome. Requires Zn(2+) as cofactor.

It catalyses the reaction Couples ATP hydrolysis with the unwinding of duplex DNA by translocating in the 3'-5' direction.. It carries out the reaction ATP + H2O = ADP + phosphate + H(+). Functionally, initiates the restart of stalled replication forks, which reloads the replicative helicase on sites other than the origin of replication. Recognizes and binds to abandoned replication forks and remodels them to uncover a helicase loading site. Promotes assembly of the primosome at these replication forks. The chain is Replication restart protein PriA from Rickettsia prowazekii (strain Madrid E).